The chain runs to 137 residues: Peptide methionine sulfoxide reductase MsrB (137 aa).

Residues 7-129 (VDDLKENLSE…NSASLSFTDE (123 aa)) enclose the MsrB domain. Residues Cys-46, Cys-49, Cys-95, and Cys-98 each contribute to the Zn(2+) site. Cys-118 acts as the Nucleophile in catalysis.

The protein belongs to the MsrB Met sulfoxide reductase family. It depends on Zn(2+) as a cofactor.

It carries out the reaction L-methionyl-[protein] + [thioredoxin]-disulfide + H2O = L-methionyl-(R)-S-oxide-[protein] + [thioredoxin]-dithiol. This chain is Peptide methionine sulfoxide reductase MsrB, found in Escherichia fergusonii (strain ATCC 35469 / DSM 13698 / CCUG 18766 / IAM 14443 / JCM 21226 / LMG 7866 / NBRC 102419 / NCTC 12128 / CDC 0568-73).